The sequence spans 59 residues: Gallinacin-14 (59 aa).

Positions Met-1–Pro-18 are cleaved as a signal peptide. Cystine bridges form between Cys-25–Cys-54, Cys-32–Cys-47, and Cys-37–Cys-55.

The protein belongs to the beta-defensin family.

It is found in the secreted. It localises to the cytoplasmic granule. Functionally, has bactericidal activity. The sequence is that of Gallinacin-14 (GAL14) from Gallus gallus (Chicken).